The sequence spans 65 residues: ATP synthase F(0) complex subunit 8 (65 aa).

Residues T8–F24 form a helical membrane-spanning segment. Position 53 is an N6-acetyllysine; alternate (K53). K53 is modified (N6-succinyllysine; alternate). Position 56 is an N6-acetyllysine (K56).

It belongs to the ATPase protein 8 family. As to quaternary structure, component of the ATP synthase complex composed at least of ATP5F1A/subunit alpha, ATP5F1B/subunit beta, ATP5MC1/subunit c (homooctomer), MT-ATP6/subunit a, MT-ATP8/subunit 8, ATP5ME/subunit e, ATP5MF/subunit f, ATP5MG/subunit g, ATP5MK/subunit k, ATP5MJ/subunit j, ATP5F1C/subunit gamma, ATP5F1D/subunit delta, ATP5F1E/subunit epsilon, ATP5PF/subunit F6, ATP5PB/subunit b, ATP5PD/subunit d, ATP5PO/subunit OSCP. ATP synthase complex consists of a soluble F(1) head domain (subunits alpha(3) and beta(3)) - the catalytic core - and a membrane F(0) domain - the membrane proton channel (subunits c, a, 8, e, f, g, k and j). These two domains are linked by a central stalk (subunits gamma, delta, and epsilon) rotating inside the F1 region and a stationary peripheral stalk (subunits F6, b, d, and OSCP). Interacts with PRICKLE3.

The protein localises to the mitochondrion membrane. Functionally, subunit 8, of the mitochondrial membrane ATP synthase complex (F(1)F(0) ATP synthase or Complex V) that produces ATP from ADP in the presence of a proton gradient across the membrane which is generated by electron transport complexes of the respiratory chain. ATP synthase complex consist of a soluble F(1) head domain - the catalytic core - and a membrane F(1) domain - the membrane proton channel. These two domains are linked by a central stalk rotating inside the F(1) region and a stationary peripheral stalk. During catalysis, ATP synthesis in the catalytic domain of F(1) is coupled via a rotary mechanism of the central stalk subunits to proton translocation. In vivo, can only synthesize ATP although its ATP hydrolase activity can be activated artificially in vitro. Part of the complex F(0) domain. The polypeptide is ATP synthase F(0) complex subunit 8 (Capra ibex ibex (Alpine ibex)).